The following is a 458-amino-acid chain: Phosphomethylpyrimidine synthase (458 aa).

Substrate contacts are provided by residues Asn80, Met109, Tyr139, His175, 195–197, 236–239, and Glu275; these read SRG and DSLR. His279 lines the Zn(2+) pocket. Tyr302 provides a ligand contact to substrate. Position 343 (His343) interacts with Zn(2+). [4Fe-4S] cluster contacts are provided by Cys423, Cys426, and Cys431.

The protein belongs to the ThiC family. [4Fe-4S] cluster is required as a cofactor.

The enzyme catalyses 5-amino-1-(5-phospho-beta-D-ribosyl)imidazole + S-adenosyl-L-methionine = 4-amino-2-methyl-5-(phosphooxymethyl)pyrimidine + CO + 5'-deoxyadenosine + formate + L-methionine + 3 H(+). It functions in the pathway cofactor biosynthesis; thiamine diphosphate biosynthesis. Its function is as follows. Catalyzes the synthesis of the hydroxymethylpyrimidine phosphate (HMP-P) moiety of thiamine from aminoimidazole ribotide (AIR) in a radical S-adenosyl-L-methionine (SAM)-dependent reaction. This Acaryochloris marina (strain MBIC 11017) protein is Phosphomethylpyrimidine synthase.